Consider the following 90-residue polypeptide: Probable two-component-system connector protein YmgA (90 aa).

Positions 63–80 (SDSGGPNRRTATADNKSM) are enriched in polar residues. Residues 63–90 (SDSGGPNRRTATADNKSMFNGKKINRIH) form a disordered region.

Functionally, probably a connector protein for RcsB/C regulation of biofilm formation, providing additional signal input into the two-component signaling pathway. May serve to stimulate biofilm maturation, probably via the Rcs phosphorelay. Mild overexpression at 16 degrees Celsius increases the production of colanic acid, an exopolysaccharide and matrix component, and reduces adhesive curli fimbriae expression. Both of these effects require RcsB. This Escherichia coli (strain K12) protein is Probable two-component-system connector protein YmgA (ymgA).